Consider the following 426-residue polypeptide: Enolase (426 aa).

Gln-162 is a binding site for (2R)-2-phosphoglycerate. Glu-204 (proton donor) is an active-site residue. Mg(2+) is bound by residues Asp-241, Glu-286, and Asp-313. Lys-338, Arg-367, Ser-368, and Lys-389 together coordinate (2R)-2-phosphoglycerate. The Proton acceptor role is filled by Lys-338.

The protein belongs to the enolase family. The cofactor is Mg(2+).

It is found in the cytoplasm. The protein resides in the secreted. The protein localises to the cell surface. It carries out the reaction (2R)-2-phosphoglycerate = phosphoenolpyruvate + H2O. It functions in the pathway carbohydrate degradation; glycolysis; pyruvate from D-glyceraldehyde 3-phosphate: step 4/5. Its function is as follows. Catalyzes the reversible conversion of 2-phosphoglycerate (2-PG) into phosphoenolpyruvate (PEP). It is essential for the degradation of carbohydrates via glycolysis. This is Enolase from Aliarcobacter butzleri (strain RM4018) (Arcobacter butzleri).